A 259-amino-acid chain; its full sequence is Bisphosphoglycerate mutase (259 aa).

At serine 2 the chain carries N-acetylserine. Residues 10 to 17, 23 to 24, arginine 62, 89 to 92, arginine 100, and 116 to 117 contribute to the substrate site; these read RHGEGQWN, CS, ERHY, and RR. Histidine 11 (tele-phosphohistidine intermediate) is an active-site residue. Glutamate 89 (proton donor/acceptor) is an active-site residue. The residue at position 122 (threonine 122) is a Phosphothreonine. 189–190 provides a ligand contact to substrate; that stretch reads GN.

This sequence belongs to the phosphoglycerate mutase family. BPG-dependent PGAM subfamily. As to quaternary structure, homodimer. In terms of tissue distribution, expressed in red blood cells. Expressed in placenta (labyrinthine trophoblasts).

It carries out the reaction (2R)-3-phospho-glyceroyl phosphate = (2R)-2,3-bisphosphoglycerate + H(+). The enzyme catalyses (2R)-2-phosphoglycerate = (2R)-3-phosphoglycerate. With respect to regulation, at alkaline pH BPGM favors the synthase reaction; however, at lower pH the phosphatase reaction is dominant. Inhibited by citrate. Its function is as follows. Plays a major role in regulating hemoglobin oxygen affinity by controlling the levels of its allosteric effector 2,3-bisphosphoglycerate (2,3-BPG). Also exhibits mutase (EC 5.4.2.11) activity. In Mus musculus (Mouse), this protein is Bisphosphoglycerate mutase (Bpgm).